Here is a 349-residue protein sequence, read N- to C-terminus: N-acetyltaurine hydrolase (349 aa).

The a divalent metal cation site is built by His26, His28, Glu169, His201, His230, and Asp298.

This sequence belongs to the metallo-dependent hydrolases superfamily. Phosphotriesterase family. A divalent metal cation is required as a cofactor.

It localises to the cytoplasm. It is found in the cytosol. It carries out the reaction N-acetyltaurine + H2O = taurine + acetate. The enzyme catalyses N-propanoyltaurine + H2O = propanoate + taurine. The catalysed reaction is N-acetyl-L-methionine + H2O = L-methionine + acetate. It catalyses the reaction N-acetyl-L-isoleucine + H2O = L-isoleucine + acetate. It carries out the reaction N-acetyl-L-leucine + H2O = L-leucine + acetate. The enzyme catalyses N-acetyl-L-valine + H2O = L-valine + acetate. In terms of biological role, N-acetyltaurine hydrolase that catalyzes the hydrolysis of N-acetyltaurine into taurine and acetate. PTER also acts on other N-acetyl amino acids (Met, Ile, Leu, Val) and N-propionyltaurine, but at lower rates. This chain is N-acetyltaurine hydrolase (pter), found in Danio rerio (Zebrafish).